Consider the following 536-residue polypeptide: Cytochrome P450 monooxygenase fscF (536 aa).

The helical transmembrane segment at 9–29 threads the bilayer; that stretch reads VSWLCALFTAIALYCIAVAFY. C464 lines the heme pocket.

Belongs to the cytochrome P450 family. Requires heme as cofactor.

It localises to the membrane. It functions in the pathway secondary metabolite biosynthesis. Cytochrome P450 monooxygenase; part of the fragmented gene cluster that mediates the biosynthesis of fusarochromene, a tryptophan-derived metabolite closely related to a group of mycotoxins including fusarochromanone. Within the pathway, fscF catalyzes the epoxidation of desacetylfusarochromene which opens the way to the production of fusarochromanones. The first step of the pathway is the epimerization of L-tryptophan to D-tryptophan in the presence of the NRPS-like tryptophan epimerase fscC. D-tryptophan is subsequently hydroxylated by the tryptophan 6-hydroxylase fscE to yield 6-hydroxytryptophan. The pyrrole ring undergoes cleavaged by the tryptophan 2,3-dioxygenase fscD and is finally converted to 4-hydroxykyrunenine by the hydrolase fscH. The NRPS-like oxidoreductase fscA reduces the carboxyl group to primary alcohol and the DMATS-type prenyltransferase fscG performs prenylation, followed by the formation of a chromene ring catalyzed by the oxidoreductase fscI, which leads to desacetylfusarochromene. Epoxidation by fscF and rearrangement reactions of chromene double bonds convert compound desacetylfusarochromene to fusarochromanones. Although specific acetyltransferases were not found near the fsc gene cluster, several predicted enzymes containing the N-acetyltransferase superfamily domain are present in the genome of F.equiseti. These predicted enzymes may have the potential to convert desacetylfusarochromene to fusarochromene. The sequence is that of Cytochrome P450 monooxygenase fscF from Fusarium equiseti (Fusarium scirpi).